The sequence spans 546 residues: Glutamate--tRNA ligase (546 aa).

The 'HIGH' region signature appears at 42 to 52 (PSPTGFIHLGN). A 'KMSKS' region motif is present at residues 293 to 297 (KLSKR). Lys-296 contacts ATP.

This sequence belongs to the class-I aminoacyl-tRNA synthetase family. Glutamate--tRNA ligase type 1 subfamily. In terms of assembly, monomer.

The protein localises to the cytoplasm. The catalysed reaction is tRNA(Glu) + L-glutamate + ATP = L-glutamyl-tRNA(Glu) + AMP + diphosphate. In terms of biological role, catalyzes the attachment of glutamate to tRNA(Glu) in a two-step reaction: glutamate is first activated by ATP to form Glu-AMP and then transferred to the acceptor end of tRNA(Glu). In Acetivibrio thermocellus (strain ATCC 27405 / DSM 1237 / JCM 9322 / NBRC 103400 / NCIMB 10682 / NRRL B-4536 / VPI 7372) (Clostridium thermocellum), this protein is Glutamate--tRNA ligase.